The following is a 584-amino-acid chain: 2-succinyl-5-enolpyruvyl-6-hydroxy-3-cyclohexene-1-carboxylate synthase (584 aa).

It belongs to the TPP enzyme family. MenD subfamily. In terms of assembly, homodimer. Requires Mg(2+) as cofactor. The cofactor is Mn(2+). Thiamine diphosphate serves as cofactor.

It catalyses the reaction isochorismate + 2-oxoglutarate + H(+) = 5-enolpyruvoyl-6-hydroxy-2-succinyl-cyclohex-3-ene-1-carboxylate + CO2. Its pathway is quinol/quinone metabolism; 1,4-dihydroxy-2-naphthoate biosynthesis; 1,4-dihydroxy-2-naphthoate from chorismate: step 2/7. It participates in quinol/quinone metabolism; menaquinone biosynthesis. Its function is as follows. Catalyzes the thiamine diphosphate-dependent decarboxylation of 2-oxoglutarate and the subsequent addition of the resulting succinic semialdehyde-thiamine pyrophosphate anion to isochorismate to yield 2-succinyl-5-enolpyruvyl-6-hydroxy-3-cyclohexene-1-carboxylate (SEPHCHC). This chain is 2-succinyl-5-enolpyruvyl-6-hydroxy-3-cyclohexene-1-carboxylate synthase, found in Bacillus cereus (strain ZK / E33L).